Reading from the N-terminus, the 153-residue chain is 3-hydroxyacyl-[acyl-carrier-protein] dehydratase FabZ (153 aa).

The active site involves His-58.

This sequence belongs to the thioester dehydratase family. FabZ subfamily.

The protein resides in the cytoplasm. The enzyme catalyses a (3R)-hydroxyacyl-[ACP] = a (2E)-enoyl-[ACP] + H2O. In terms of biological role, involved in unsaturated fatty acids biosynthesis. Catalyzes the dehydration of short chain beta-hydroxyacyl-ACPs and long chain saturated and unsaturated beta-hydroxyacyl-ACPs. The protein is 3-hydroxyacyl-[acyl-carrier-protein] dehydratase FabZ of Bradyrhizobium diazoefficiens (strain JCM 10833 / BCRC 13528 / IAM 13628 / NBRC 14792 / USDA 110).